A 132-amino-acid chain; its full sequence is Small ribosomal subunit protein uS11 (132 aa).

Belongs to the universal ribosomal protein uS11 family. As to quaternary structure, part of the 30S ribosomal subunit.

Functionally, located on the platform of the 30S subunit. This is Small ribosomal subunit protein uS11 from Caldivirga maquilingensis (strain ATCC 700844 / DSM 13496 / JCM 10307 / IC-167).